We begin with the raw amino-acid sequence, 111 residues long: Nucleoid-associated protein NMCC_1355 (111 aa).

It belongs to the YbaB/EbfC family. In terms of assembly, homodimer.

It localises to the cytoplasm. The protein localises to the nucleoid. Binds to DNA and alters its conformation. May be involved in regulation of gene expression, nucleoid organization and DNA protection. In Neisseria meningitidis serogroup C (strain 053442), this protein is Nucleoid-associated protein NMCC_1355.